We begin with the raw amino-acid sequence, 651 residues long: PTS system N-acetylglucosamine-specific EIICBA component (651 aa).

A PTS EIIC type-1 domain is found at 1–371 (MNILGFFQRL…FNLKTPGRED (371 aa)). 12 consecutive transmembrane segments (helical) span residues 16–36 (LPIA…PDLL), 40–60 (FIAQ…AIGV), 70–90 (GSAA…MVTI), 92–112 (PEIN…GAVY), 132–152 (FVPI…GYVW), 165–185 (WIVS…RLLI), 192–212 (VLNT…GTVF), 232–252 (GFFP…YLAA), 264–284 (LLSV…EFLF), 285–305 (LFLA…SLFI), 308–328 (ALGI…VLMY), and 339–359 (MLLV…SAVI). The PTS EIIB type-1 domain occupies 390-472 (TQLATSYIAA…KKVVTRGPVA (83 aa)). The Phosphocysteine intermediate; for EIIB activity role is filled by C412. Phosphocysteine; by EIIA is present on C412. Residues 519–623 (DEAFASKAVG…SMISPVVCSN (105 aa)) form the PTS EIIA type-1 domain. Zn(2+) contacts are provided by H556 and H571. Residue H571 is the Tele-phosphohistidine intermediate; for EIIA activity of the active site. H571 bears the Phosphohistidine; by HPr mark.

It depends on Zn(2+) as a cofactor.

Its subcellular location is the cell inner membrane. The catalysed reaction is N(pros)-phospho-L-histidyl-[protein] + N-acetyl-D-glucosamine(out) = N-acetyl-D-glucosamine 6-phosphate(in) + L-histidyl-[protein]. Functionally, the phosphoenolpyruvate-dependent sugar phosphotransferase system (sugar PTS), a major carbohydrate active transport system, catalyzes the phosphorylation of incoming sugar substrates concomitantly with their translocation across the cell membrane. This system is involved in N-acetylglucosamine transport. This chain is PTS system N-acetylglucosamine-specific EIICBA component (nagE), found in Klebsiella pneumoniae.